The following is a 356-amino-acid chain: Alanine racemase, catabolic (356 aa).

Lys-35 (proton acceptor; specific for D-alanine) is an active-site residue. An N6-(pyridoxal phosphate)lysine modification is found at Lys-35. Arg-130 is a substrate binding site. The active-site Proton acceptor; specific for L-alanine is Tyr-253. Substrate is bound at residue Met-301.

This sequence belongs to the alanine racemase family. Pyridoxal 5'-phosphate is required as a cofactor.

It carries out the reaction L-alanine = D-alanine. In terms of biological role, isomerizes L-alanine to D-alanine which is then oxidized to pyruvate by DadA. The protein is Alanine racemase, catabolic (dadX) of Escherichia coli O157:H7.